A 1292-amino-acid chain; its full sequence is Sorbin and SH3 domain-containing protein 1 (1292 aa).

4 disordered regions span residues 1–29 (MSSECDGGSKAVMNGLAPGSNGQDKATAD), 73–158 (LRAS…AQPE), 214–275 (HLQR…SSPL), and 318–381 (REQQ…MDEV). Positions 74 to 89 (RASSSYRETPSSSPAS) are enriched in low complexity. T82 is modified (phosphothreonine). Residues S86 and S89 each carry the phosphoserine modification. A compositionally biased stretch (basic and acidic residues) spans 93-102 (TRQHESKPGL). E105, L114, V137, S146, S242, and S259 each carry phosphoserine. The span at 114–128 (LSSSADANGNAQPSS) shows a compositional bias: polar residues. Over residues 240 to 252 (SFSPPPPLVPPAP) the composition is skewed to pro residues. Residues 266-275 (AVSSTDSSPL) are compositionally biased toward polar residues. Phosphoserine is present on S341. T344 carries the phosphothreonine modification. Residues E346 and S350 each carry the phosphoserine modification. Over residues 354–365 (AIEKRAKDDSRR) the composition is skewed to basic and acidic residues. A SoHo domain is found at 366–469 (VVKSTQDLSD…YSPRYSFSED (104 aa)). Phosphoserine occurs at positions 369, 374, and 387. Residues 405-534 (LNRDTPEENP…TRKYRAEPKS (130 aa)) are disordered. The segment covering 437 to 450 (YTPTYQFPASTPSP) has biased composition (polar residues). Residues S452, S465, D469, S472, R478, and S481 each carry the phosphoserine modification. Positions 510–534 (SSERNDWEPPDKKVDTRKYRAEPKS) are enriched in basic and acidic residues. Y536 bears the Phosphotyrosine; by ABL1 mark. Phosphoserine is present on residues S556, N603, S609, and S640. Residues 628–650 (APSANVPQSSAISPTPEISSETP) form a disordered region. A Phosphotyrosine; by ABL1 modification is found at Y654. S665 and K700 each carry phosphoserine. The disordered stretch occupies residues 692 to 716 (PLQGLSGLKRPSSSASTKDSESPRH). At T708 the chain carries Phosphothreonine. A phosphoserine mark is found at S713, I730, D735, and I765. The 60-residue stretch at 793–852 (SEMRPARAKFDFKAQTLKELPLQKGDIVYIYKQIDQNWYEGEHHGRVGIFPRTYIELLPP) folds into the SH3 1 domain. T862 carries the phosphothreonine modification. In terms of domain architecture, SH3 2 spans 867–928 (LEYGEAIAKF…PITYVDVIKR (62 aa)). V923 carries the phosphoserine modification. Residue Y937 is modified to Phosphotyrosine. Residues 944–954 (SSPSRSATASP) are compositionally biased toward low complexity. Disordered regions lie at residues 944 to 976 (SSPSRSATASPQFSSHSKLITPAPSSLPHSRRA), 1041 to 1064 (SDRPTPRSVASPLALPSPHKTYSL), 1106 to 1150 (QLSD…KKSC), and 1162 to 1230 (TEQR…SQTS). A phosphoserine mark is found at S945 and S953. A compositionally biased stretch (polar residues) spans 955 to 971 (QFSSHSKLITPAPSSLP). Residues 1106–1117 (QLSDAFSSQSKR) show a composition bias toward polar residues. Residues 1119–1136 (PWREESGQYERKAERGAG) are compositionally biased toward basic and acidic residues. Positions 1162–1172 (TEQRLSDLNTP) are enriched in polar residues. A compositionally biased stretch (basic and acidic residues) spans 1192–1203 (QTERHRGGEQAG). Positions 1211–1230 (GSQQPQAQQRRVTPDRSQTS) are enriched in polar residues. At Q1213 the chain carries Phosphoserine. The region spanning 1231 to 1292 (QDLFSYQALY…PGNYVKPLYL (62 aa)) is the SH3 3 domain. Residue Y1240 is modified to Phosphotyrosine; by ABL1.

In terms of assembly, interacts (via third SH3 domain) with the Ten-1 ICD form of TENM1; the interaction induces the translocation of SORBS1 to the nucleus. Interacts with INSM1. Interacts with the long isoform of AFDN and with VCL. AFDN and VCL bind to SORBS1 in a competitive manner and do not form a ternary complex. Interacts with ABL1, CBL, CBLB and INPPL1/SHIP2 through the third SH3 domain. Interaction with ABL1 occurs only after insulin stimulation while this has no effect on the interaction with INPPL1. Interacts with the insulin receptor but dissociates from it following insulin stimulation. Also interacts with SCA7, PTK2/FAK1 and flotillin. Interacts (via SH3 domain 2) with PXN. O-glycosylated. Detected in skeletal muscle (at protein level). Widely expressed with highest levels in heart and skeletal muscle.

The protein localises to the cell junction. The protein resides in the adherens junction. It localises to the cell membrane. Its subcellular location is the cytoplasm. It is found in the cytoskeleton. The protein localises to the focal adhesion. The protein resides in the nucleus. It localises to the nucleus matrix. Its function is as follows. Plays a role in tyrosine phosphorylation of CBL by linking CBL to the insulin receptor. Required for insulin-stimulated glucose transport. Involved in formation of actin stress fibers and focal adhesions. The sequence is that of Sorbin and SH3 domain-containing protein 1 from Homo sapiens (Human).